We begin with the raw amino-acid sequence, 135 residues long: Small ribosomal subunit protein uS9 (135 aa).

This sequence belongs to the universal ribosomal protein uS9 family.

The protein is Small ribosomal subunit protein uS9 of Petrotoga mobilis (strain DSM 10674 / SJ95).